Reading from the N-terminus, the 301-residue chain is Oxygen-dependent coproporphyrinogen-III oxidase (301 aa).

Ser90 serves as a coordination point for substrate. The a divalent metal cation site is built by His94 and His104. The active-site Proton donor is the His104. Asn106–Arg108 provides a ligand contact to substrate. The a divalent metal cation site is built by His143 and His173. Positions Tyr238–Arg273 are important for dimerization. Gly256–Arg258 is a binding site for substrate.

This sequence belongs to the aerobic coproporphyrinogen-III oxidase family. As to quaternary structure, homodimer. A divalent metal cation is required as a cofactor.

The protein resides in the cytoplasm. It carries out the reaction coproporphyrinogen III + O2 + 2 H(+) = protoporphyrinogen IX + 2 CO2 + 2 H2O. Its pathway is porphyrin-containing compound metabolism; protoporphyrin-IX biosynthesis; protoporphyrinogen-IX from coproporphyrinogen-III (O2 route): step 1/1. In terms of biological role, involved in the heme biosynthesis. Catalyzes the aerobic oxidative decarboxylation of propionate groups of rings A and B of coproporphyrinogen-III to yield the vinyl groups in protoporphyrinogen-IX. The sequence is that of Oxygen-dependent coproporphyrinogen-III oxidase from Nitrosomonas eutropha (strain DSM 101675 / C91 / Nm57).